The primary structure comprises 121 residues: Small ribosomal subunit protein uS13 (121 aa).

Positions 91 to 121 are disordered; that stretch reads HRMSLPVRGQRTRTNARTRRGSRKTVAGRKK. Residues 100–121 show a composition bias toward basic residues; sequence QRTRTNARTRRGSRKTVAGRKK.

It belongs to the universal ribosomal protein uS13 family. Part of the 30S ribosomal subunit. Forms a loose heterodimer with protein S19. Forms two bridges to the 50S subunit in the 70S ribosome.

In terms of biological role, located at the top of the head of the 30S subunit, it contacts several helices of the 16S rRNA. In the 70S ribosome it contacts the 23S rRNA (bridge B1a) and protein L5 of the 50S subunit (bridge B1b), connecting the 2 subunits; these bridges are implicated in subunit movement. Contacts the tRNAs in the A and P-sites. This chain is Small ribosomal subunit protein uS13, found in Prochlorococcus marinus (strain AS9601).